We begin with the raw amino-acid sequence, 853 residues long: MKFGFIAHPTSVGLKRYVKMIDLLQRNSTELHSGYKRDLWRRENLVPFMNFAKITSATGATCEGVIKYMPLVADEMLADARGIANRVVSGIEELVEDGAELVGLGGFTSIVGRRGEATAEKSPVPVTSGNSLTTYAGYKALMQIQSWLDIQPEQEPVAIVGYPGSICLALSRLLLAQGFSLHLLHRAGHKDEDELLSHLPEQYRSRVTLTSDPEDLYPRCKLFVAATSAGGVIDPYKLQPGSVFIDVALPRDINSDTRPDRDDILIIDGGCVTATDAVKLGGESLNVTIKQQLNGCMAETIVLALENRRENFSLGRYLALDNVLEIGELAEKHGFLVYPLASYGERIDRQRVINLKRYYHHDIYSDEPDTEQPPASQLAFIDAIIAQDPAREDTLDRYHQFINPMMVEFLKLQHCDNVFRRASGTQLFTADGEAFLDMVAGYGCINLGHNPQPIIDALKAYLDAQGPNFIQYISIPEQAAKLAEVLCHFAPGNMGRVFFSNSGTEAVEAAMKLAKASTGKAGIAYLKNSYHGKTLGALSITGREKHRRHFKPLLASMIEVPFADIEALRQTLSRDDIGALMIEPIQGEGGVHVPPPGYLRTVQEICRQTDTLLMVDEVQTGLGRTGKLFACEWEGIEPDVLMLSKSLSGGVMPIGATLCRAIFGNGPYGTADRFLMHSSTFGGGNIAAVVALSALREILAQDLVGNAERLGTYFKQALTDVAARYPFVAEIAGRGLMLGIQFDQTFAGAVGASAREFATRLPGDWHTTWKFLPDPVQAHLKAAMERMEQSLGEMFCMKFVTKLCQDHNILTFITANSSTVIRIQPPLTISKAEIDRFVSAFATVCDELSTFLE.

Residue 503 to 504 participates in pyridoxal 5'-phosphate binding; sequence GT. Residue lysine 645 is modified to N6-(pyridoxal phosphate)lysine. Residue threonine 680 participates in pyridoxal 5'-phosphate binding.

Belongs to the class-III pyridoxal-phosphate-dependent aminotransferase family. In terms of assembly, homodimer. It depends on pyridoxal 5'-phosphate as a cofactor.

Its pathway is antibiotic biosynthesis; prodigiosin biosynthesis. Functionally, involved in the biosynthesis of 2-methyl-3-n-amyl-pyrrole (MAP), one of the terminal products involved in the biosynthesis of the red antibiotic prodigiosin (Pig). Catalyzes the transamination to the aldehyde group of 3-acetyloctanal, resulting in an aminoketone, which spontaneously cyclizes to yield the dihydro form of MAP (H2MAP). This is Aminotransferase PigE from Serratia sp. (strain ATCC 39006) (Prodigiosinella confusarubida).